Consider the following 518-residue polypeptide: Bifunctional purine biosynthesis protein PurH (518 aa).

In terms of domain architecture, MGS-like spans 1-144 (MSKRALISVS…KNHASVTVVC (144 aa)).

It belongs to the PurH family.

The catalysed reaction is (6R)-10-formyltetrahydrofolate + 5-amino-1-(5-phospho-beta-D-ribosyl)imidazole-4-carboxamide = 5-formamido-1-(5-phospho-D-ribosyl)imidazole-4-carboxamide + (6S)-5,6,7,8-tetrahydrofolate. The enzyme catalyses IMP + H2O = 5-formamido-1-(5-phospho-D-ribosyl)imidazole-4-carboxamide. It participates in purine metabolism; IMP biosynthesis via de novo pathway; 5-formamido-1-(5-phospho-D-ribosyl)imidazole-4-carboxamide from 5-amino-1-(5-phospho-D-ribosyl)imidazole-4-carboxamide (10-formyl THF route): step 1/1. The protein operates within purine metabolism; IMP biosynthesis via de novo pathway; IMP from 5-formamido-1-(5-phospho-D-ribosyl)imidazole-4-carboxamide: step 1/1. This Lactococcus lactis subsp. lactis (strain IL1403) (Streptococcus lactis) protein is Bifunctional purine biosynthesis protein PurH.